We begin with the raw amino-acid sequence, 188 residues long: Pyridoxal 5'-phosphate synthase subunit PdxT (188 aa).

46 to 48 lines the L-glutamine pocket; it reads GES. Cysteine 78 acts as the Nucleophile in catalysis. L-glutamine contacts are provided by residues arginine 106 and 132–133; that span reads IR. Active-site charge relay system residues include histidine 169 and glutamate 171.

It belongs to the glutaminase PdxT/SNO family. As to quaternary structure, in the presence of PdxS, forms a dodecamer of heterodimers. Only shows activity in the heterodimer.

The catalysed reaction is aldehydo-D-ribose 5-phosphate + D-glyceraldehyde 3-phosphate + L-glutamine = pyridoxal 5'-phosphate + L-glutamate + phosphate + 3 H2O + H(+). The enzyme catalyses L-glutamine + H2O = L-glutamate + NH4(+). It participates in cofactor biosynthesis; pyridoxal 5'-phosphate biosynthesis. Catalyzes the hydrolysis of glutamine to glutamate and ammonia as part of the biosynthesis of pyridoxal 5'-phosphate. The resulting ammonia molecule is channeled to the active site of PdxS. The polypeptide is Pyridoxal 5'-phosphate synthase subunit PdxT (Tropheryma whipplei (strain Twist) (Whipple's bacillus)).